Reading from the N-terminus, the 508-residue chain is Photosystem II CP47 reaction center protein (508 aa).

6 consecutive transmembrane segments (helical) span residues 21–36 (AVHLMHTALVAGWAGS), 101–115 (IVLSGLLFLAAVWHW), 140–156 (GIHLFLSGLLCFGFGAF), 203–218 (IAAGVVGIVAGLFHLT), 237–252 (VLSSSLAAVFFAAFVV), and 457–472 (SFALLFFFGHIWHGSR).

This sequence belongs to the PsbB/PsbC family. PsbB subfamily. As to quaternary structure, PSII is composed of 1 copy each of membrane proteins PsbA, PsbB, PsbC, PsbD, PsbE, PsbF, PsbH, PsbI, PsbJ, PsbK, PsbL, PsbM, PsbT, PsbX, PsbY, PsbZ, Psb30/Ycf12, peripheral proteins PsbO, CyanoQ (PsbQ), PsbU, PsbV and a large number of cofactors. It forms dimeric complexes. It depends on Binds multiple chlorophylls. PSII binds additional chlorophylls, carotenoids and specific lipids. as a cofactor.

It is found in the cellular thylakoid membrane. One of the components of the core complex of photosystem II (PSII). It binds chlorophyll and helps catalyze the primary light-induced photochemical processes of PSII. PSII is a light-driven water:plastoquinone oxidoreductase, using light energy to abstract electrons from H(2)O, generating O(2) and a proton gradient subsequently used for ATP formation. The chain is Photosystem II CP47 reaction center protein from Synechococcus elongatus (strain ATCC 33912 / PCC 7942 / FACHB-805) (Anacystis nidulans R2).